A 106-amino-acid chain; its full sequence is Biogenesis of lysosome-related organelles complex 1 subunit 6 (106 aa).

The tract at residues 78–106 (KKTSQLELSDTNIEDGSTTSTPTTTNKSQ) is disordered. The span at 82-93 (QLELSDTNIEDG) shows a compositional bias: polar residues. Residues 94–106 (STTSTPTTTNKSQ) are compositionally biased toward low complexity.

It belongs to the BLOC1S6 family. In terms of assembly, homodimer (isoform 1). Component of the biogenesis of lysosome-related organelles complex-1 (BLOC-1) composed at least of blos-1, blos-2, blos-4, dsbn-1, glo-2, mutd-1 and snpn-1. Isoform 1 interacts with blos-1 and blos-4.

The protein resides in the cytoplasm. The protein localises to the endosome. Its function is as follows. Component of the biogenesis of lysosome-related organelles complex-1 (BLOC-1) involved in gut granule biogenesis. The protein is Biogenesis of lysosome-related organelles complex 1 subunit 6 (glo-2) of Caenorhabditis elegans.